The following is a 172-amino-acid chain: RNA silencing suppressor p19 (172 aa).

A disordered region spans residues 153–172 (EGNVSRGSPEGTEAFKEESE).

Belongs to the tombusvirus protein p19 family. In terms of assembly, homodimer.

Its function is as follows. Viral suppressor of RNA silencing which binds specifically to silencing RNAs (siRNAs). Acts as a molecular caliper to specifically select siRNAs based on the length of the duplex region of the RNA. The polypeptide is RNA silencing suppressor p19 (Pear latent virus (PeLV)).